A 537-amino-acid polypeptide reads, in one-letter code: Probable metalloreductase AIM14 (537 aa).

A run of 7 helical transmembrane segments spans residues 20–40 (GFFIFALTIIQTIFFLQVKFI), 58–78 (ITNPPIWLMVTVWLLIVIFTG), 95–112 (RYGRMAYCLIPLNIYLVL), 133–155 (KWTSRIIVFCSTIHAAGYVYKWI), 167–187 (FLNLLGVVVFVFLVVLAIISI), 194–216 (VYSTFYLIHNVTAWSMVILITFH), and 221–238 (VTVFAVISLILLGYQLYL). Residues 97–213 (GRMAYCLIPL…VTAWSMVILI (117 aa)) enclose the Ferric oxidoreductase domain. An FAD-binding FR-type domain is found at 187 to 363 (IRPFRRKVYS…GGSGISLGLP (177 aa)). The segment at 432–475 (EEQGHGLLNNDNENGIELQNMPKTNEESSEANSTNSKNNKDNQE) is disordered.

The protein belongs to the ferric reductase (FRE) family. AIM14 subfamily.

It is found in the membrane. In terms of biological role, probable cell surface metalloreductase. May be involved in iron or copper homeostasis. This Candida dubliniensis (strain CD36 / ATCC MYA-646 / CBS 7987 / NCPF 3949 / NRRL Y-17841) (Yeast) protein is Probable metalloreductase AIM14 (AIM14).